We begin with the raw amino-acid sequence, 213 residues long: DNA-directed RNA polymerase subunit alpha (213 aa).

It belongs to the RNA polymerase alpha chain family. As to quaternary structure, in plastids the minimal PEP RNA polymerase catalytic core is composed of four subunits: alpha, beta, beta', and beta''. When a (nuclear-encoded) sigma factor is associated with the core the holoenzyme is formed, which can initiate transcription.

It is found in the plastid. Its subcellular location is the chloroplast. It catalyses the reaction RNA(n) + a ribonucleoside 5'-triphosphate = RNA(n+1) + diphosphate. Functionally, DNA-dependent RNA polymerase catalyzes the transcription of DNA into RNA using the four ribonucleoside triphosphates as substrates. The protein is DNA-directed RNA polymerase subunit alpha (rpoA) of Euglena stellata.